Here is a 936-residue protein sequence, read N- to C-terminus: Isoleucine--tRNA ligase (936 aa).

A 'HIGH' region motif is present at residues 58 to 68; that stretch reads PYANGRAHLGT. E561 is an L-isoleucyl-5'-AMP binding site. The 'KMSKS' region signature appears at 602–606; sequence KMSKS. Residue K605 coordinates ATP. Positions 899, 902, 919, and 922 each coordinate Zn(2+).

It belongs to the class-I aminoacyl-tRNA synthetase family. IleS type 1 subfamily. In terms of assembly, monomer. Requires Zn(2+) as cofactor.

The protein localises to the cytoplasm. It carries out the reaction tRNA(Ile) + L-isoleucine + ATP = L-isoleucyl-tRNA(Ile) + AMP + diphosphate. Catalyzes the attachment of isoleucine to tRNA(Ile). As IleRS can inadvertently accommodate and process structurally similar amino acids such as valine, to avoid such errors it has two additional distinct tRNA(Ile)-dependent editing activities. One activity is designated as 'pretransfer' editing and involves the hydrolysis of activated Val-AMP. The other activity is designated 'posttransfer' editing and involves deacylation of mischarged Val-tRNA(Ile). In Coxiella burnetii (strain RSA 331 / Henzerling II), this protein is Isoleucine--tRNA ligase.